The following is a 1095-amino-acid chain: Solute carrier family 12 member 1 (1095 aa).

At 1 to 173 (MSVSIPSNSV…EEDMTGVVKF (173 aa)) the chain is on the cytoplasmic side. The RFXV motif motif lies at 16-19 (RFQV). Positions 29-49 (AAAVGDSADPPHYEETSFGDE) are disordered. Phosphoserine is present on residues Ser-57 and Ser-87. Residues Thr-91, Thr-96, Thr-101, and Thr-114 each carry the phosphothreonine modification. Phosphoserine is present on Ser-116. Ser-126 is modified (phosphoserine; by AMPK). Ser-144 carries the phosphoserine modification. A helical membrane pass occupies residues 174–194 (GWVKGVLVRCMLNIWGVMLFI). Topologically, residues 195–197 (RLS) are extracellular. Residues 198–218 (WIVGEAGIGLGVLIILLSTMV) form a helical membrane-spanning segment. Over 219–255 (TSITGLSTSAIATNGFVRGGGAYYLISRSLGPEFGGS) the chain is Cytoplasmic. Residues 256 to 276 (IGLIFAFANAVAVAMYVVGFA) traverse the membrane as a helical segment. Residues 277–298 (ETVVDLLKESDSMMVDPTNDIR) lie on the Extracellular side of the membrane. Residues 299-319 (IIGSITVVILLGISVAGMEWE) traverse the membrane as a helical segment. Residues 320–323 (AKAQ) are Cytoplasmic-facing. A helical transmembrane segment spans residues 324–344 (VILLVILLIAIANFFIGTVIP). Residues 345–375 (SNNEKKSRGFFNYQASIFAENFGPSFTKGEG) are Extracellular-facing. The helical transmembrane segment at 376-396 (FFSVFAIFFPAATGILAGANI) threads the bilayer. The Cytoplasmic segment spans residues 397–413 (SGDLEDPQDAIPRGTML). The chain crosses the membrane as a helical span at residues 414-434 (AIFITTVAYIGVAICVAACVV). At 435-546 (RDATGSMNDT…NNEPLRGYFL (112 aa)) the chain is on the extracellular side. Asn-442 and Asn-452 each carry an N-linked (GlcNAc...) asparagine glycan. 2 consecutive transmembrane segments (helical) span residues 547–567 (TFVI…APII) and 568–588 (SNFF…ASYA). At 589–605 (KSPGWRPAYGIYNMWVS) the chain is on the extracellular side. A helical membrane pass occupies residues 606-626 (LFGAILCCAVMFVINWWAAVI). The Cytoplasmic segment spans residues 627 to 1095 (TYVIELFLYI…NHKNVLTFYS (469 aa)).

This sequence belongs to the SLC12A transporter family. As to quaternary structure, when phosphorylated, interacts with PPP3CB. In terms of processing, phosphorylated at Ser-87, Thr-96 and Thr-101 by OXSR1/OSR1 and STK39/SPAK downstream of WNK kinases (WNK1, WNK2, WNK3 or WNK4), promoting its activity. Short-term cyclosporine administration increases SLC12A1 phosphorylation in kidney thick ascending limb, possibly through the inhibition of PPP3CB/calcineurin A beta phosphatase. As to expression, predominantly expressed in kidney (at protein level). In terms of tissue distribution, kidney-specific; most highly expressed in the outer stripe of outer medulla (at protein level). Kidney-specific; most highly expressed in the cortical thick ascending limb (at protein level). As to expression, kidney-specific; most highly expressed in the inner stripe of outer medulla (at protein level).

The protein localises to the apical cell membrane. The enzyme catalyses K(+)(out) + 2 chloride(out) + Na(+)(out) = K(+)(in) + 2 chloride(in) + Na(+)(in). Its activity is regulated as follows. Activated following phosphorylation by OXSR1/OSR1 and STK39/SPAK downstream of WNK kinases (WNK1, WNK2, WNK3 or WNK4). With respect to regulation, inhibited by mercury dichloride and diuretic drug bumetaide. Inactive in isotonic conditions. Its function is as follows. Renal sodium, potassium and chloride ion cotransporter that mediates the transepithelial NaCl reabsorption in the thick ascending limb and plays an essential role in the urinary concentration and volume regulation. Electrically silent transporter system. High affinity, high capacity cotransporter for sodium, potassium and chloride ions, with a coupling ratio 1Na(+):1K(+):2Cl(-). Functionally, high affinity, low capacity cotransporter for sodium, potassium and chloride ions, with a coupling ratio 1Na(+):1K(+):2Cl(-). In terms of biological role, low affinity, low capacity cotransporter for sodium, potassium and chloride ions, with a coupling ratio 1Na(+):1K(+):2Cl(-). This is Solute carrier family 12 member 1 (Slc12a1) from Mus musculus (Mouse).